A 295-amino-acid polypeptide reads, in one-letter code: Tyrosine recombinase XerC (295 aa).

The 85-residue stretch at 1-85 (MHILLQKYYN…ALRQFLNYLV (85 aa)) folds into the Core-binding (CB) domain. Residues 106–285 (YLPKNMDMEQ…DFQHLAQVYD (180 aa)) form the Tyr recombinase domain. Residues Arg145, Lys169, His237, Arg240, and His263 contribute to the active site. Tyr272 serves as the catalytic O-(3'-phospho-DNA)-tyrosine intermediate.

Belongs to the 'phage' integrase family. XerC subfamily. In terms of assembly, forms a cyclic heterotetrameric complex composed of two molecules of XerC and two molecules of XerD.

The protein resides in the cytoplasm. Its function is as follows. Site-specific tyrosine recombinase, which acts by catalyzing the cutting and rejoining of the recombining DNA molecules. The XerC-XerD complex is essential to convert dimers of the bacterial chromosome into monomers to permit their segregation at cell division. It also contributes to the segregational stability of plasmids. This is Tyrosine recombinase XerC from Histophilus somni (strain 2336) (Haemophilus somnus).